The following is a 473-amino-acid chain: 3-isopropylmalate dehydratase large subunit (473 aa).

Positions 351, 414, and 417 each coordinate [4Fe-4S] cluster.

Belongs to the aconitase/IPM isomerase family. LeuC type 1 subfamily. In terms of assembly, heterodimer of LeuC and LeuD. The cofactor is [4Fe-4S] cluster.

It catalyses the reaction (2R,3S)-3-isopropylmalate = (2S)-2-isopropylmalate. Its pathway is amino-acid biosynthesis; L-leucine biosynthesis; L-leucine from 3-methyl-2-oxobutanoate: step 2/4. In terms of biological role, catalyzes the isomerization between 2-isopropylmalate and 3-isopropylmalate, via the formation of 2-isopropylmaleate. The polypeptide is 3-isopropylmalate dehydratase large subunit (Paracidovorax citrulli (strain AAC00-1) (Acidovorax citrulli)).